The primary structure comprises 762 residues: MSSHITLIKTNTSNENQMTQCNYPVDNDVMIIQAMVNNVTKQITPVWPLEKFIACNSLHGFESMSFEEAVIQNQTAKKGTPFNEKLERVNWHMIKWCGSFLDIGQGTIEMPHRDKGLYFGFLKLAPFDSTLHQNNKSTKNWLSNLPEMPEQAIRLCLDKLGVLNQRQEEFLQSTLSHLPGWAGYIKWISEWKNRNGKEENPVSLVDFLAVRLIITCILWPEANLEEKKKEKDSADTKQLIQNIKHKEDDYRQLLLKKLLPELNKVQIKGNRAKAQMVFCIDVRSEPFRRCIEKLGHYETLGFAGFFGLPVSIKDYDGETIKDSCPVLLKPRFNIHEKAIAANEHCLEHHEKGKEFKKILNRVYQQLKYNFSTPFALVESLGIWCGITMFLKSCSPIFARRLTQDLNEMICPSIQTQPVFELDLLEKEVGISLQEQIAYAEMALRLMGLTDNFAKLVIFCGHGSSTQNNPYASALDCGACGGNQGGKNAQLLASILNKITVRRALAENGINIPQDTVFCGAQHDTTTDEVEIYHSNVSQFIDQDILDQLRADLNMAKHNNNLERINYLNSIDCAEKDIVRRSADWSETRPEWGLARNAAFIVAPRQLTKNIDLEGRCFLHSYDWSKDEDGTLLETILTAPMVVAQWINTQYLFSTIDNVAYGSGSKITHNVAGKIGVMQGNASDLMHGLPLQSVMSHDEKSFHEPQRLLTVVYAPREIISELVEKHDVLKTLFFNEWVHLVAIDPRSHLFYKLEKTNTWSVIK.

Positions 279, 281, 461, and 476 each coordinate Zn(2+).

The protein belongs to the inorganic carbon transporter (TC 9.A.2) DabA family. In terms of assembly, forms a complex with DabB. Zn(2+) serves as cofactor.

It is found in the cell inner membrane. In terms of biological role, part of an energy-coupled inorganic carbon pump. This Legionella pneumophila subsp. pneumophila (strain Philadelphia 1 / ATCC 33152 / DSM 7513) protein is Probable inorganic carbon transporter subunit DabA.